Reading from the N-terminus, the 398-residue chain is 4-hydroxy-3-methylbut-2-enyl diphosphate reductase (398 aa).

Cys66 contributes to the [4Fe-4S] cluster binding site. (2E)-4-hydroxy-3-methylbut-2-enyl diphosphate is bound at residue His96. His96 contributes to the dimethylallyl diphosphate binding site. An isopentenyl diphosphate-binding site is contributed by His96. Residue Cys157 coordinates [4Fe-4S] cluster. His185 is a (2E)-4-hydroxy-3-methylbut-2-enyl diphosphate binding site. Position 185 (His185) interacts with dimethylallyl diphosphate. His185 is a binding site for isopentenyl diphosphate. The active-site Proton donor is the Glu187. Residue Thr250 coordinates (2E)-4-hydroxy-3-methylbut-2-enyl diphosphate. Cys288 serves as a coordination point for [4Fe-4S] cluster. 4 residues coordinate (2E)-4-hydroxy-3-methylbut-2-enyl diphosphate: Ser317, Ser318, Asn319, and Ser379. Dimethylallyl diphosphate is bound by residues Ser317, Ser318, Asn319, and Ser379. Residues Ser317, Ser318, Asn319, and Ser379 each coordinate isopentenyl diphosphate.

Belongs to the IspH family. It depends on [4Fe-4S] cluster as a cofactor.

It catalyses the reaction isopentenyl diphosphate + 2 oxidized [2Fe-2S]-[ferredoxin] + H2O = (2E)-4-hydroxy-3-methylbut-2-enyl diphosphate + 2 reduced [2Fe-2S]-[ferredoxin] + 2 H(+). The catalysed reaction is dimethylallyl diphosphate + 2 oxidized [2Fe-2S]-[ferredoxin] + H2O = (2E)-4-hydroxy-3-methylbut-2-enyl diphosphate + 2 reduced [2Fe-2S]-[ferredoxin] + 2 H(+). Its pathway is isoprenoid biosynthesis; dimethylallyl diphosphate biosynthesis; dimethylallyl diphosphate from (2E)-4-hydroxy-3-methylbutenyl diphosphate: step 1/1. It participates in isoprenoid biosynthesis; isopentenyl diphosphate biosynthesis via DXP pathway; isopentenyl diphosphate from 1-deoxy-D-xylulose 5-phosphate: step 6/6. Its function is as follows. Catalyzes the conversion of 1-hydroxy-2-methyl-2-(E)-butenyl 4-diphosphate (HMBPP) into a mixture of isopentenyl diphosphate (IPP) and dimethylallyl diphosphate (DMAPP). Acts in the terminal step of the DOXP/MEP pathway for isoprenoid precursor biosynthesis. The chain is 4-hydroxy-3-methylbut-2-enyl diphosphate reductase from Synechococcus sp. (strain CC9311).